Reading from the N-terminus, the 1099-residue chain is Adenylate cyclase type 7 (1099 aa).

Residues 1–33 lie on the Cytoplasmic side of the membrane; sequence MPAKGRYFLNEGDEGPDQAALYEKYRLTSLHGP. A run of 6 helical transmembrane segments spans residues 34 to 54, 63 to 83, 95 to 117, 122 to 142, 147 to 167, and 178 to 198; these read LLLL…SIAF, QVVL…YVLV, ALAL…DSLE, AWEQ…LLPL, AIVA…AVTR, and LGLQ…TGAF. Topologically, residues 199–595 are cytoplasmic; that stretch reads HKHQLQDASR…YRLVPIPRAR (397 aa). Mg(2+) is bound by residues Asp286, Ile287, and Asp330. Residues 286–291, 328–330, and Arg374 contribute to the ATP site; these read DIVGFT and LGD. The tract at residues 456-476 is disordered; that stretch reads DPRSQQPPPPSHHLSKPKGDA. The mediates regulation of adenylate cyclase activity by C5 alpha-induced G- beta and gamma pathway stretch occupies residues 479 to 484; sequence KMRASV. A mediates regulation of adenylate cyclase activity by sphingosine 1-phosphate-induced G alpha 13 pathway region spans residues 493 to 501; sequence WGAARPFAH. A disordered region spans residues 504–543; the sequence is HRESVSSSETPISNGRRQKAIPLRRHRAPDRSASPKGRLE. A compositionally biased stretch (polar residues) spans 508-518; that stretch reads VSSSETPISNG. The tract at residues 508–585 is modulates adenylate cyclase activity by modulating the binding of G(s)alpha to the high-affinity G(s)alpha binding site in 7C1a/7C2; sequence VSSSETPISN…IFLEKGFERE (78 aa). The span at 519–531 shows a compositional bias: basic residues; that stretch reads RRQKAIPLRRHRA. Helical transmembrane passes span 596–616, 621–641, and 670–689; these read YDFA…LLVM, TLGV…SFCF, and LVLV…INMP. A glycan (N-linked (GlcNAc...) asparagine) is linked at Asn702. 3 helical membrane passes run 719 to 738, 747 to 766, and 813 to 833; these read LLPY…SVFL, MLLT…SPCW, and DLKI…ILLS. Over 834–1099 the chain is Cytoplasmic; that stretch reads RQIDYYCRLD…TAKFQGLGLN (266 aa). ATP is bound by residues Lys950, 1029 to 1031, 1036 to 1040, and Lys1076; these read DIW and NVASR.

It belongs to the adenylyl cyclase class-4/guanylyl cyclase family. It depends on Mg(2+) as a cofactor. Mn(2+) is required as a cofactor. In terms of processing, phosphorylated by PRKCD. In terms of tissue distribution, most abundant in heart, spleen and lung.

The protein resides in the membrane. It catalyses the reaction ATP = 3',5'-cyclic AMP + diphosphate. Its activity is regulated as follows. Activated by the G protein alpha subunit. Activated by the G protein beta and gamma subunit complex. Activated by GNA13 and GNA12. Ethanol and phorbol 12,13-dibutanoate significantly potentiate adenylate cyclase activity generated in response to the activation of the prostanoid receptor by the agonist prostaglandin E1(1-) in a PKC-dependent manner. Inhibited by lithium. Catalyzes the formation of cAMP in response to activation of G protein-coupled receptors. Functions in signaling cascades activated namely by thrombin and sphingosine 1-phosphate and mediates regulation of cAMP synthesis through synergistic action of the stimulatory G alpha protein with GNA13. Also, during inflammation, mediates zymosan-induced increase intracellular cAMP, leading to protein kinase A pathway activation in order to modulate innate immune responses through heterotrimeric G proteins G(12/13). Functions in signaling cascades activated namely by dopamine and C5 alpha chain and mediates regulation of cAMP synthesis through synergistic action of the stimulatory G protein with G beta:gamma complex. Functions, through cAMP response regulation, to keep inflammation under control during bacterial infection by sensing the presence of serum factors, such as the bioactive lysophospholipid (LPA) that regulate LPS-induced TNF-alpha production. However, it is also required for the optimal functions of B and T cells during adaptive immune responses by regulating cAMP synthesis in both B and T cells. The protein is Adenylate cyclase type 7 of Mus musculus (Mouse).